A 274-amino-acid polypeptide reads, in one-letter code: 2,3,4,5-tetrahydropyridine-2,6-dicarboxylate N-succinyltransferase (274 aa).

Residues R104 and D141 each contribute to the substrate site.

It belongs to the transferase hexapeptide repeat family. In terms of assembly, homotrimer.

It localises to the cytoplasm. It carries out the reaction (S)-2,3,4,5-tetrahydrodipicolinate + succinyl-CoA + H2O = (S)-2-succinylamino-6-oxoheptanedioate + CoA. Its pathway is amino-acid biosynthesis; L-lysine biosynthesis via DAP pathway; LL-2,6-diaminopimelate from (S)-tetrahydrodipicolinate (succinylase route): step 1/3. In Shewanella sediminis (strain HAW-EB3), this protein is 2,3,4,5-tetrahydropyridine-2,6-dicarboxylate N-succinyltransferase.